The primary structure comprises 286 residues: Undecaprenyl-diphosphatase (286 aa).

Helical transmembrane passes span 17–37 (VVLGIVQGLTEFLPISSTAHL), 49–69 (PGVAVTAVIQLGSIAAVIGYF), 98–118 (IAIAVGTLPVVVAGLLIKLFW), 126–146 (LRSVASIGIVSIVMALLLALA), 159–179 (VQGLDGVVVGLAQALAIIPGV), 204–224 (FLLGIPAITLAGLVELKGAFA), 232–252 (LPMLLGILSAAVVSWLAIAWL), and 261–281 (TWPFVIYRLVFGVVLLALVLA).

This sequence belongs to the UppP family.

Its subcellular location is the cell inner membrane. It carries out the reaction di-trans,octa-cis-undecaprenyl diphosphate + H2O = di-trans,octa-cis-undecaprenyl phosphate + phosphate + H(+). Functionally, catalyzes the dephosphorylation of undecaprenyl diphosphate (UPP). Confers resistance to bacitracin. The protein is Undecaprenyl-diphosphatase of Synechococcus sp. (strain RCC307).